Reading from the N-terminus, the 97-residue chain is Protein RALF-like 2 (97 aa).

An N-terminal signal peptide occupies residues Met-1–Ala-25. Intrachain disulfides connect Cys-42/Cys-49 and Cys-61/Cys-67.

Belongs to the plant rapid alkalinization factor (RALF) family.

Its subcellular location is the secreted. Its function is as follows. Cell signaling peptide that may regulate plant stress, growth, and development. Mediates a rapid alkalinization of extracellular space by mediating a transient increase in the cytoplasmic Ca(2+) concentration leading to a calcium-dependent signaling events through a cell surface receptor and a concomitant activation of some intracellular mitogen-activated protein kinases. The chain is Protein RALF-like 2 (RALFL2) from Arabidopsis thaliana (Mouse-ear cress).